Here is a 316-residue protein sequence, read N- to C-terminus: Olfactory receptor 2T11 (316 aa).

Over 1–22 (MTNTSSSDFTLLGLLVNSEAAG) the chain is Extracellular. Asn3 carries an N-linked (GlcNAc...) asparagine glycan. The chain crosses the membrane as a helical span at residues 23-46 (IVFTVILAVFLGAVTANLVMIFLI). At 47–54 (QVDSRLHT) the chain is on the cytoplasmic side. The chain crosses the membrane as a helical span at residues 55–76 (PMYFLLSQLSIMDTLFICTTVP). Over 77 to 97 (KLLADMVSKEKIISFVACGIQ) the chain is Extracellular. A disulfide bridge links Cys94 with Cys186. The chain crosses the membrane as a helical span at residues 98-117 (IFLYLTMIGSEFFLLGLMAY). At 118–136 (DCYVAVCNPLRYPVLMNRK) the chain is on the cytoplasmic side. The helical transmembrane segment at 137–155 (KCLLLAAGAWFGGSLDGFL) threads the bilayer. Topologically, residues 156 to 192 (LTPITMNVPYCGSRSINHFFCEIPAVLKLACADTSLY) are extracellular. Residues 193–216 (ETLMYICCVLMLLIPISIISTSYS) form a helical membrane-spanning segment. At 217–233 (LILLTIHRMPSAEGRKK) the chain is on the cytoplasmic side. A helical transmembrane segment spans residues 234 to 256 (AFTTCSSHLTVVSIFYGAAFYTY). The Extracellular portion of the chain corresponds to 257 to 269 (VLPQSFHTPEQDK). A helical transmembrane segment spans residues 270 to 289 (VVSAFYTIVTPMLNPLIYSL). At 290-316 (RNKDVIGAFKKVFACCSSAQKVATSDA) the chain is on the cytoplasmic side.

This sequence belongs to the G-protein coupled receptor 1 family.

It localises to the cell membrane. Functionally, odorant receptor. The polypeptide is Olfactory receptor 2T11 (OR2T11) (Homo sapiens (Human)).